The sequence spans 88 residues: Small ribosomal subunit protein bS20 (88 aa).

It belongs to the bacterial ribosomal protein bS20 family.

In terms of biological role, binds directly to 16S ribosomal RNA. The chain is Small ribosomal subunit protein bS20 from Coprothermobacter proteolyticus (strain ATCC 35245 / DSM 5265 / OCM 4 / BT).